Consider the following 317-residue polypeptide: Acetylglutamate kinase (317 aa).

Substrate contacts are provided by residues 70 to 71 (GG), Arg-92, and Asn-191.

Belongs to the acetylglutamate kinase family. ArgB subfamily.

It localises to the cytoplasm. The enzyme catalyses N-acetyl-L-glutamate + ATP = N-acetyl-L-glutamyl 5-phosphate + ADP. It functions in the pathway amino-acid biosynthesis; L-arginine biosynthesis; N(2)-acetyl-L-ornithine from L-glutamate: step 2/4. Its function is as follows. Catalyzes the ATP-dependent phosphorylation of N-acetyl-L-glutamate. This Corynebacterium glutamicum (strain R) protein is Acetylglutamate kinase.